Reading from the N-terminus, the 133-residue chain is Putative nickel-responsive regulator (133 aa).

Ni(2+) is bound by residues histidine 74, histidine 85, histidine 87, and cysteine 93.

It belongs to the transcriptional regulatory CopG/NikR family. Requires Ni(2+) as cofactor.

Transcriptional regulator. The sequence is that of Putative nickel-responsive regulator from Saccharolobus islandicus (strain Y.N.15.51 / Yellowstone #2) (Sulfolobus islandicus).